Here is a 56-residue protein sequence, read N- to C-terminus: Large ribosomal subunit protein bL33 (56 aa).

This sequence belongs to the bacterial ribosomal protein bL33 family.

The chain is Large ribosomal subunit protein bL33 from Rickettsia typhi (strain ATCC VR-144 / Wilmington).